Here is a 127-residue protein sequence, read N- to C-terminus: UPF0325 protein VP2321 (127 aa).

It belongs to the UPF0325 family.

This chain is UPF0325 protein VP2321, found in Vibrio parahaemolyticus serotype O3:K6 (strain RIMD 2210633).